The following is a 428-amino-acid chain: MFPDIEVNDKGHLLIGGADAVELADEYGTPLYVIDEMRIRENYRRLYRAFSGEYSRFQVFYACKANTNLAVMRILEEEGSGIDAVSPGEIYTALMAGFDPDRILYTGNNVRDDELQFALDSGVRINVDSRSQLLRLSEIAPEGLRISFRVNPLVGAGHHEHCITGGEMSKFGVMEREAPEVYRMAMDLGFEPVGIHAHIGSGILDPEPFMLAVETLMDIAGRVHEATGVEFEFIDFGGGLGIPYTPEEEPLDIDEFASKITGLFKDKLSEYGLGRPMMCLEPGRYIVGDASYLLTRVNTIKESYRKFAGVDAGFNTLLRPAMYGSYHHILVAERPLDEPSEKMDVAGNVCESGDLFARDRQLPEINEGDVLAIMNAGAYSFSMSSQYNSRPRPAEVLVREGKVDVVRERETFSDLLRGQNVPARLLKR.

Lysine 64 bears the N6-(pyridoxal phosphate)lysine mark. Pyridoxal 5'-phosphate contacts are provided by residues glycine 239 and 281-284 (EPGR). Residues arginine 284, arginine 319, and tyrosine 323 each contribute to the substrate site. Cysteine 350 acts as the Proton donor in catalysis. 2 residues coordinate substrate: glutamate 351 and tyrosine 379. Position 379 (tyrosine 379) interacts with pyridoxal 5'-phosphate.

This sequence belongs to the Orn/Lys/Arg decarboxylase class-II family. LysA subfamily. As to quaternary structure, homodimer. Requires pyridoxal 5'-phosphate as cofactor.

It catalyses the reaction meso-2,6-diaminopimelate + H(+) = L-lysine + CO2. It functions in the pathway amino-acid biosynthesis; L-lysine biosynthesis via DAP pathway; L-lysine from DL-2,6-diaminopimelate: step 1/1. In terms of biological role, specifically catalyzes the decarboxylation of meso-diaminopimelate (meso-DAP) to L-lysine. The chain is Diaminopimelate decarboxylase from Methanothermobacter thermautotrophicus (strain ATCC 29096 / DSM 1053 / JCM 10044 / NBRC 100330 / Delta H) (Methanobacterium thermoautotrophicum).